Reading from the N-terminus, the 507-residue chain is Maturase K (507 aa).

The protein belongs to the intron maturase 2 family. MatK subfamily.

The protein resides in the plastid. It is found in the chloroplast. In terms of biological role, usually encoded in the trnK tRNA gene intron. Probably assists in splicing its own and other chloroplast group II introns. In Buxus microphylla (Littleleaf boxwood), this protein is Maturase K.